Consider the following 416-residue polypeptide: LL-diaminopimelate aminotransferase (416 aa).

Residues Tyr15 and Gly42 each contribute to the substrate site. Residues Tyr72, 108-109, Tyr132, Asn187, Tyr218, and 246-248 contribute to the pyridoxal 5'-phosphate site; these read SK and SFS. Substrate-binding residues include Lys109, Tyr132, and Asn187. The residue at position 249 (Lys249) is an N6-(pyridoxal phosphate)lysine. Pyridoxal 5'-phosphate-binding residues include Arg257 and Asn292. Residues Asn292 and Arg388 each contribute to the substrate site.

This sequence belongs to the class-I pyridoxal-phosphate-dependent aminotransferase family. LL-diaminopimelate aminotransferase subfamily. Homodimer. It depends on pyridoxal 5'-phosphate as a cofactor.

It catalyses the reaction (2S,6S)-2,6-diaminopimelate + 2-oxoglutarate = (S)-2,3,4,5-tetrahydrodipicolinate + L-glutamate + H2O + H(+). Its pathway is amino-acid biosynthesis; L-lysine biosynthesis via DAP pathway; LL-2,6-diaminopimelate from (S)-tetrahydrodipicolinate (aminotransferase route): step 1/1. Its function is as follows. Involved in the synthesis of meso-diaminopimelate (m-DAP or DL-DAP), required for both lysine and peptidoglycan biosynthesis. Catalyzes the direct conversion of tetrahydrodipicolinate to LL-diaminopimelate. The polypeptide is LL-diaminopimelate aminotransferase (Synechococcus sp. (strain JA-2-3B'a(2-13)) (Cyanobacteria bacterium Yellowstone B-Prime)).